The following is a 90-amino-acid chain: Bombyxin B-5 (90 aa).

An N-terminal signal peptide occupies residues 1–20 (MMKTAVMFILVVVISLTYSS). Disulfide bonds link cysteine 30–cysteine 75, cysteine 42–cysteine 88, and cysteine 74–cysteine 79. Positions 49-64 (GGAQYAPYWQETYLRS) are cleaved as a propeptide — c peptide like.

It belongs to the insulin family. In terms of assembly, heterodimer of a B chain and an A chain linked by two disulfide bonds.

The protein localises to the secreted. Functionally, brain peptide responsible for activation of prothoracic glands to produce ecdysone in insects. This chain is Bombyxin B-5 (BBXB5), found in Bombyx mori (Silk moth).